Here is a 145-residue protein sequence, read N- to C-terminus: Large ribosomal subunit protein uL15 (145 aa).

Positions 1 to 58 are disordered; that stretch reads MFSLLKPKGAAKRRKIVGRGPGSGLGKTSGRGQKGQKARNTSPRLGFEGGQTPLYRRL. The segment covering 19-33 has biased composition (gly residues); that stretch reads RGPGSGLGKTSGRGQ.

The protein belongs to the universal ribosomal protein uL15 family. Part of the 50S ribosomal subunit.

Its function is as follows. Binds to the 23S rRNA. The polypeptide is Large ribosomal subunit protein uL15 (Borreliella afzelii (strain PKo) (Borrelia afzelii)).